Here is a 121-residue protein sequence, read N- to C-terminus: SVIELGKMIIQLTNKTPASYVSYGCFCGGGDKGKPKDATDRCCFVHSCCYDTLPDCSPKTDQYKYKWENGEIICENSTSCKKRICECDKAVAICLRDNLNTYNKKYRIYPNFLCRGDPDKC.

Disulfide bonds link Cys-25–Cys-114, Cys-27–Cys-43, Cys-42–Cys-94, Cys-48–Cys-121, Cys-49–Cys-87, Cys-56–Cys-80, and Cys-74–Cys-85. The interval 104-116 (KKYRIYPNFLCRG) is important for membrane-damaging activities in eukaryotes and bacteria; heparin-binding.

Belongs to the phospholipase A2 family. Group II subfamily. S49 sub-subfamily. In terms of assembly, monomer. In terms of tissue distribution, expressed by the venom gland.

The protein resides in the secreted. Its function is as follows. Snake venom phospholipase A2 homolog that lacks enzymatic activity. Shows high myotoxin activities and displays edema-inducing activities. Has cytotoxic activities against HUVEC cells (LC(50)=2.5 uL) and human lung adenocarcinoma A549 cells (LC(50)=2.9 uL). This chain is Phospholipase A2 homolog EPL_00195, found in Echis pyramidum leakeyi (Leakey's carpet viper).